We begin with the raw amino-acid sequence, 284 residues long: D-tagatose-1,6-bisphosphate aldolase subunit GatY (284 aa).

Catalysis depends on Asp82, which acts as the Proton donor. Residues His83 and His180 each coordinate Zn(2+). Residue Gly181 participates in dihydroxyacetone phosphate binding. Position 208 (His208) interacts with Zn(2+). Dihydroxyacetone phosphate contacts are provided by residues 209–211 (GAS) and 230–233 (NVAT).

Belongs to the class II fructose-bisphosphate aldolase family. TagBP aldolase GatY subfamily. Forms a complex with GatZ. Zn(2+) serves as cofactor.

It catalyses the reaction D-tagatofuranose 1,6-bisphosphate = D-glyceraldehyde 3-phosphate + dihydroxyacetone phosphate. The protein operates within carbohydrate metabolism; D-tagatose 6-phosphate degradation; D-glyceraldehyde 3-phosphate and glycerone phosphate from D-tagatose 6-phosphate: step 2/2. In terms of biological role, catalytic subunit of the tagatose-1,6-bisphosphate aldolase GatYZ, which catalyzes the reversible aldol condensation of dihydroxyacetone phosphate (DHAP or glycerone-phosphate) with glyceraldehyde 3-phosphate (G3P) to produce tagatose 1,6-bisphosphate (TBP). Requires GatZ subunit for full activity and stability. Is involved in the catabolism of galactitol. The polypeptide is D-tagatose-1,6-bisphosphate aldolase subunit GatY (Escherichia coli O6:H1 (strain CFT073 / ATCC 700928 / UPEC)).